Here is a 448-residue protein sequence, read N- to C-terminus: FAD-linked oxidoreductase nodO (448 aa).

An FAD-binding PCMH-type domain is found at 35-206 (PEHFPLAIVK…IRFFLKTCPL (172 aa)).

The protein belongs to the oxygen-dependent FAD-linked oxidoreductase family. FAD is required as a cofactor.

It participates in secondary metabolite biosynthesis. In terms of biological role, FAD-linked oxidoreductase; part of the gene cluster that mediates the biosynthesis of the indole diterpenes nodulisporic acids (NA). Nodulisporic acid A (NAA) and its chemically modified derivatives are of particular significance because of their highly potent insecticidal activity against blood-feeding arthropods and lack of observable adverse effects on mammals, in particular the tremogenicity associated with the paspaline-derived IDTs is not observed. The geranylgeranyl diphosphate (GGPP) synthase ggs1, localized outside of the cluster, is proposed to catalyze the first step in nodulisporic acid biosynthesis via conversion of farnesyl pyrophosphate and isopentyl pyrophosphate into geranylgeranyl pyrophosphate (GGPP). Condensation of indole-3-glycerol phosphate with GGPP by the prenyl transferase nodC then forms 3-geranylgeranylindole (3-GGI). Epoxidation by the FAD-dependent monooxygenase nodM leads to a single-epoxidized-GGI that is substrate of the terpene cyclase nodB for cyclization to yield emindole SB. The terminal methyl carbon, C28, of emindole SB is then oxidized by the cytochrome P450 monooxygenase nodW to produce nodulisporic acid F (NAF), the pentacyclic core of NAA. NAF is converted to nodulisporic acid E (NAE) via prenylation. This step is probably performed by one of the indole diterpene prenyltransferases nodD1 or nodD2. Several oxidation steps performed by the FAD-linked oxidoreductase nodO and one of the cytochrome P450 monooxygenase nodR, nodX or nodZ further convert NAE to nodulisporic acid D (NAD). NAD is substrate of cytochrome P450 monooxygenase nodJ to produce the precursor of nodulisporic acid C (NAC), converted to NAC by one of the indole diterpene prenyltransferases nodD1 or nodD2. The FAD-dependent monooxygenase nodY2 then oxidizes NAC to nodulisporic acid B (NAB). Finally NAB is converted to NAA by one of the cytochrome P450 monooxygenases nodR, nodX or nodZ. This is FAD-linked oxidoreductase nodO from Hypoxylon pulicicidum.